The following is a 155-amino-acid chain: Transmembrane protein C1orf162 (155 aa).

The disordered stretch occupies residues 1 to 28; that stretch reads MGGNGSTCKPDTERQGTLSTAAPTTSPA. Low complexity predominate over residues 19–28; sequence STAAPTTSPA. Residues 41–61 traverse the membrane as a helical segment; that stretch reads ILAFCAGVLLTLLLIAFIFLI. The segment at 92 to 114 is disordered; sequence ADHSKPQAPDPHSDPPAKLSSIP. At Ser140 the chain carries Phosphoserine.

The protein localises to the membrane. This is Transmembrane protein C1orf162 (C1orf162) from Homo sapiens (Human).